The primary structure comprises 165 residues: Lipoprotein signal peptidase (165 aa).

Helical transmembrane passes span 9–29 (PFLW…LAVV), 65–85 (WQKY…LFFL), and 97–119 (TGYA…HGFV). Catalysis depends on residues aspartate 121 and aspartate 139. A helical transmembrane segment spans residues 134–154 (VFNIADVAICIGAGLLAIDAF).

Belongs to the peptidase A8 family.

The protein resides in the cell inner membrane. It carries out the reaction Release of signal peptides from bacterial membrane prolipoproteins. Hydrolyzes -Xaa-Yaa-Zaa-|-(S,diacylglyceryl)Cys-, in which Xaa is hydrophobic (preferably Leu), and Yaa (Ala or Ser) and Zaa (Gly or Ala) have small, neutral side chains.. It functions in the pathway protein modification; lipoprotein biosynthesis (signal peptide cleavage). In terms of biological role, this protein specifically catalyzes the removal of signal peptides from prolipoproteins. The sequence is that of Lipoprotein signal peptidase from Histophilus somni (strain 129Pt) (Haemophilus somnus).